The chain runs to 553 residues: HTH-type transcriptional regulator SgrR (553 aa).

Residues 1 to 113 (MSTSRLQQQF…RQMLLSQLGR (113 aa)) enclose the HTH marR-type domain. Residues 26–49 (LQALAEVLNCSRRHVRSLLGKMQH) constitute a DNA-binding region (H-T-H motif). Residues 163-494 (ELEPDLSHHW…EELHQDIESW (332 aa)) form a solute-binding region.

In terms of biological role, activates the small RNA gene sgrS under glucose-phosphate stress conditions as well as yfdZ. Represses its own transcription under both stress and non-stress conditions. Might act as a sensor of the intracellular accumulation of phosphoglucose by binding these molecules in its C-terminal solute-binding domain. In Yersinia pseudotuberculosis serotype I (strain IP32953), this protein is HTH-type transcriptional regulator SgrR.